The following is a 183-amino-acid chain: Peptidyl-prolyl cis-trans isomerase H (183 aa).

Positions 19 to 182 (FFDVALGGEP…QDVVIIQCGE (164 aa)) constitute a PPIase cyclophilin-type domain.

The protein belongs to the cyclophilin-type PPIase family. PPIase H subfamily.

It is found in the nucleus. The catalysed reaction is [protein]-peptidylproline (omega=180) = [protein]-peptidylproline (omega=0). Functionally, PPIases accelerate the folding of proteins. It catalyzes the cis-trans isomerization of proline imidic peptide bonds in oligopeptides. In Emericella nidulans (strain FGSC A4 / ATCC 38163 / CBS 112.46 / NRRL 194 / M139) (Aspergillus nidulans), this protein is Peptidyl-prolyl cis-trans isomerase H (cyp3).